Here is a 152-residue protein sequence, read N- to C-terminus: DNA-binding transcriptional activator DecR (152 aa).

An HTH asnC-type domain is found at 2–63 (LDKIDRKLLA…LLDPEKIGLG (62 aa)). Positions 21–40 (LQALAEAVNLTTTPCWKRLK) form a DNA-binding region, H-T-H motif.

Its function is as follows. Plays a role in L-cysteine detoxification. Binds to the dlsT(yhaO)-yhaM operon promoter in the presence but not absence of L-cysteine; activates transcription from the dlsT(yhaO)-yhaM operon. In Escherichia coli O157:H7, this protein is DNA-binding transcriptional activator DecR (decR).